The following is a 183-amino-acid chain: Potassium-transporting ATPase KdpC subunit (183 aa).

Residues 10–30 (LTVFTLILFAVIYPLAIYGIA) traverse the membrane as a helical segment.

Belongs to the KdpC family. As to quaternary structure, the system is composed of three essential subunits: KdpA, KdpB and KdpC.

Its subcellular location is the cell inner membrane. Functionally, part of the high-affinity ATP-driven potassium transport (or Kdp) system, which catalyzes the hydrolysis of ATP coupled with the electrogenic transport of potassium into the cytoplasm. This subunit acts as a catalytic chaperone that increases the ATP-binding affinity of the ATP-hydrolyzing subunit KdpB by the formation of a transient KdpB/KdpC/ATP ternary complex. This chain is Potassium-transporting ATPase KdpC subunit, found in Flavobacterium johnsoniae (strain ATCC 17061 / DSM 2064 / JCM 8514 / BCRC 14874 / CCUG 350202 / NBRC 14942 / NCIMB 11054 / UW101) (Cytophaga johnsonae).